The chain runs to 548 residues: Pentatricopeptide repeat-containing protein At5g15300 (548 aa).

11 PPR repeats span residues 76-110 (DVSI…GVSP), 111-145 (DRYT…GFVL), 146-176 (NEYV…SAKA), 177-211 (HKVA…DQVA), 212-238 (WNVM…FTEK), 239-273 (DVVT…GEHP), 274-308 (DVVT…ASVS), 314-348 (GTPI…DLST), 349-378 (WNTL…KVWP), 379-409 (NEVT…MRDM), and 415-445 (NIKH…MKIE). Positions 450-525 (VWRTLLGACK…PTGVSLIEED (76 aa)) are type E motif.

It belongs to the PPR family. PCMP-E subfamily.

In Arabidopsis thaliana (Mouse-ear cress), this protein is Pentatricopeptide repeat-containing protein At5g15300 (PCMP-E40).